The chain runs to 305 residues: MVKPEKFIPKAIEKISQEIKEGKAIIALSGGVDSSVCAELAYRAIGDRLQPIYIDTGLMRKGETERIKHIFSHMNLHVVYAKDRFLEALAGVTDPEEKRKAVGETFIRVFEDEAKRIAADYLIQGTIYPDRIESEGGIKSHHNVGGLPSVMDFEKIVEPIEDLYKDEVREVAWALQLPEEICERMPFPGPGLAVRILGEVTEEKLEVVREANFIVEEELLERFCPWQTFAAVLGKGTGVKGDIRAYGWIVAVRAVGSRDGMTAEALELPWEVLKHLEARITSEIPKVARVVYDITPKPPATIEFE.

Positions 2-184 constitute a GMPS ATP-PPase domain; the sequence is VKPEKFIPKA…LQLPEEICER (183 aa). An ATP-binding site is contributed by 29–35; it reads SGGVDSS.

As to quaternary structure, heterodimer composed of a glutamine amidotransferase subunit (A) and a GMP-binding subunit (B).

It carries out the reaction XMP + L-glutamine + ATP + H2O = GMP + L-glutamate + AMP + diphosphate + 2 H(+). It participates in purine metabolism; GMP biosynthesis; GMP from XMP (L-Gln route): step 1/1. Its function is as follows. Catalyzes the synthesis of GMP from XMP. In Methanosarcina acetivorans (strain ATCC 35395 / DSM 2834 / JCM 12185 / C2A), this protein is GMP synthase [glutamine-hydrolyzing] subunit B (guaAB).